Consider the following 320-residue polypeptide: Cytochrome f (320 aa).

The first 35 residues, 1 to 35 (MQTINTFSWIKEQITRSISISLILYIITRSSIANA), serve as a signal peptide directing secretion. Residues tyrosine 36, cysteine 56, cysteine 59, and histidine 60 each contribute to the heme site. Residues 286-305 (IQGLLFFFASVILAQIFLVL) traverse the membrane as a helical segment.

The protein belongs to the cytochrome f family. The 4 large subunits of the cytochrome b6-f complex are cytochrome b6, subunit IV (17 kDa polypeptide, petD), cytochrome f and the Rieske protein, while the 4 small subunits are PetG, PetL, PetM and PetN. The complex functions as a dimer. It depends on heme as a cofactor.

It localises to the plastid. The protein resides in the chloroplast thylakoid membrane. Functionally, component of the cytochrome b6-f complex, which mediates electron transfer between photosystem II (PSII) and photosystem I (PSI), cyclic electron flow around PSI, and state transitions. The chain is Cytochrome f (petA) from Spinacia oleracea (Spinach).